Here is a 672-residue protein sequence, read N- to C-terminus: Beta-galactosidase GanA (672 aa).

R105 is a binding site for substrate. C109 provides a ligand contact to Zn(2+). N143 serves as a coordination point for substrate. Residue E144 is the Proton donor of the active site. Zn(2+) contacts are provided by C149, C151, and C154. E308 serves as the catalytic Nucleophile. Residues W316 and 356-359 each bind substrate; that span reads EKLH.

It belongs to the glycosyl hydrolase 42 family. Homotrimer.

It catalyses the reaction Hydrolysis of terminal non-reducing beta-D-galactose residues in beta-D-galactosides.. Inhibited by zinc, cobalt and copper ions. Functionally, involved in galactan degradation. Hydrolyzes galactooligosaccharides released by the endo-beta-1,4-galactanase GanB from galactan. Degrades galactotetraose, galactotriose and galactobiose, generating galactose as the end product. It is unable to use lactose. In vitro, shows maximal activity with o-nitrophenyl-beta-D-galactopyranoside (ONPG) and p-nitrophenyl-beta-D-galactopyranoside (PNPG) as substrates, trace activity with p-nitrophenyl-alpha-L-arabinopyranoside and o-nitrophenyl-beta-D-fucopyranoside as substrates, but no activity with p-nitrophenyl-alpha-D-galactopyranoside, p-nitrophenyl-beta-D-glucopyranoside, o-nitrophenyl-beta-D-xylopyranoside, p-nitrophenyl-beta-D-mannopyranoside or p-nitrophenyl-alpha-L-arabinofuranoside as substrates. In Bacillus subtilis (strain 168), this protein is Beta-galactosidase GanA.